The following is a 286-amino-acid chain: Deleted in azoospermia-like-A (286 aa).

The 82-residue stretch at 33–114 (NTVFVGGIDI…PAIRKICTYV (82 aa)) folds into the RRM domain. Residues 155-180 (ACPYPSSPPMAIQQIPVGCQQPGYFQ) enclose the DAZ domain.

The protein belongs to the RRM DAZ family. Interacts with the C-terminus of pabp1 and with epabp. Prior to oocyte maturation, found in a complex with epabp and pum2 proteins and spdy1 mRNA; pum2 dissociates from the complex during maturation. Germ-line specific. Oocyte mRNA expression is first restricted to the granulo-fibrillar material (GFM) of the mitochondrial cloud and then to the oocyte germ plasm at the vegetal cortex. Remains an mRNA component of the germ plasm until the neurula stage. In 2-8 cell embryos, expressed in the germ plasm matrix between germinal granules and mitochondria. Expressed in primordial germ cells (PGCs) later in embryogenesis. In addition to the ovaries of adult females, expressed in the testis of adult and juvenile males in spermatogonia and spermatocytes. The protein is restricted to the embryonic germ plasm and primordial germ cells.

The protein localises to the cytoplasm. Functionally, RNA-binding protein that is required for primordial germ cell (PGC) differentiation and indirectly necessary for the migration of PGCs through the endoderm. May promote meiotic cell division during spermatogenesis. Shows a preference for G- and U-rich RNAs and probably binds the 3'-UTR of target mRNAs. Stimulates the initiation of translation of mRNAs through the recruitment of poly(A)-binding proteins (PABPs). The protein is Deleted in azoospermia-like-A (dazl-a) of Xenopus laevis (African clawed frog).